Reading from the N-terminus, the 298-residue chain is ADP/ATP translocase 1 (298 aa).

Residues 1-7 lie on the Mitochondrial intermembrane side of the membrane; sequence MGDHAWS. Gly2 bears the N-acetylglycine mark. One copy of the Solcar 1 repeat lies at 6-98; the sequence is WSFLKDFLAG…FAFKDKYKQL (93 aa). Ser7 bears the Phosphoserine mark. A helical membrane pass occupies residues 8 to 37; that stretch reads FLKDFLAGGVAAAVSKTAVAPIERVKLLLQ. The Mitochondrial matrix portion of the chain corresponds to 38–74; the sequence is VQHASKQISAEKQYKGIIDCVVRIPKEQGFLSFWRGN. An N6,N6,N6-trimethyllysine modification is found at Lys52. Residues 75–99 traverse the membrane as a helical segment; it reads LANVIRYFPTQALNFAFKDKYKQLF. The ADP site is built by Arg80 and Lys92. Over 100–109 the chain is Mitochondrial intermembrane; sequence LGGVDRHKQF. The helical transmembrane segment at 110-130 threads the bilayer; the sequence is WRYFAGNLASGGAAGATSLCF. 2 Solcar repeats span residues 111–201 and 212–297; these read RYFA…AKGM and VSWM…IKKY. Topologically, residues 131–178 are mitochondrial matrix; it reads VYPLDFARTRLAADVGKGAAQREFHGLGDCIIKIFKSDGLRGLYQGFN. At Lys147 the chain carries N6-succinyllysine. Cys160 is modified (S-nitrosocysteine). Residues 179-199 traverse the membrane as a helical segment; the sequence is VSVQGIIIYRAAYFGVYDTAK. Topologically, residues 200 to 210 are mitochondrial intermembrane; the sequence is GMLPDPKNVHI. Residues 211-231 traverse the membrane as a helical segment; the sequence is FVSWMIAQSVTAVAGLVSYPF. The Mitochondrial matrix portion of the chain corresponds to 232-273; sequence DTVRRRMMMQSGRKGADIMYTGTVDCWRKIAKDEGAKAFFKG. An ADP-binding site is contributed by Arg235. The segment at 235–240 is important for transport activity; it reads RRRMMM. The Nucleotide carrier signature motif signature appears at 235-240; it reads RRRMMM. Lys245 and Lys272 each carry N6-succinyllysine. The helical transmembrane segment at 274–291 threads the bilayer; sequence AWSNVLRGMGGAFVLVLY. The Mitochondrial intermembrane segment spans residues 292–298; the sequence is DEIKKYV.

It belongs to the mitochondrial carrier (TC 2.A.29) family. In terms of assembly, monomer. Found in a complex with ARL2, ARL2BP and SLC25A4/ANT1. Interacts with ARL2BP. Interacts with ARHGAP11B, thereby inhibiting the mitochondrial permeability transition pore (mPTP). Interacts with TIMM44; leading to inhibit the presequence translocase TIMM23, thereby promoting stabilization of PINK1. As to quaternary structure, (Microbial infection) Interacts with HIV-1 Vpr. In terms of processing, under cell death induction, transglutaminated by TGM2. Transglutamination leads to formation of covalent cross-links between a glutamine and the epsilon-amino group of a lysine residue, forming polymers. In terms of tissue distribution, expressed in erythrocytes (at protein level).

It localises to the mitochondrion inner membrane. It is found in the membrane. It carries out the reaction ADP(in) + ATP(out) = ADP(out) + ATP(in). It catalyses the reaction H(+)(in) = H(+)(out). Its activity is regulated as follows. The matrix-open state (m-state) is inhibited by the membrane-permeable bongkrekic acid (BKA). The cytoplasmic-open state (c-state) is inhibited by the membrane-impermeable toxic inhibitor carboxyatractyloside (CATR). Proton transporter activity is inhibited by ADP:ATP antiporter activity. Functionally, ADP:ATP antiporter that mediates import of ADP into the mitochondrial matrix for ATP synthesis, and export of ATP out to fuel the cell. Cycles between the cytoplasmic-open state (c-state) and the matrix-open state (m-state): operates by the alternating access mechanism with a single substrate-binding site intermittently exposed to either the cytosolic (c-state) or matrix (m-state) side of the inner mitochondrial membrane. In addition to its ADP:ATP antiporter activity, also involved in mitochondrial uncoupling and mitochondrial permeability transition pore (mPTP) activity. Plays a role in mitochondrial uncoupling by acting as a proton transporter: proton transport uncouples the proton flows via the electron transport chain and ATP synthase to reduce the efficiency of ATP production and cause mitochondrial thermogenesis. Proton transporter activity is inhibited by ADP:ATP antiporter activity, suggesting that SLC25A4/ANT1 acts as a master regulator of mitochondrial energy output by maintaining a delicate balance between ATP production (ADP:ATP antiporter activity) and thermogenesis (proton transporter activity). Proton transporter activity requires free fatty acids as cofactor, but does not transport it. Also plays a key role in mPTP opening, a non-specific pore that enables free passage of the mitochondrial membranes to solutes of up to 1.5 kDa, and which contributes to cell death. It is however unclear if SLC25A4/ANT1 constitutes a pore-forming component of mPTP or regulates it. Acts as a regulator of mitophagy independently of ADP:ATP antiporter activity: promotes mitophagy via interaction with TIMM44, leading to inhibit the presequence translocase TIMM23, thereby promoting stabilization of PINK1. The chain is ADP/ATP translocase 1 from Homo sapiens (Human).